A 1493-amino-acid polypeptide reads, in one-letter code: Son of sevenless homolog (1493 aa).

Residues 244–448 (TYESVAVDFL…ERVVGCVSDM (205 aa)) enclose the DH domain. Residues 496-606 (ELEKDGDLGM…WMAVLVKVTT (111 aa)) enclose the PH domain. Residues 656–824 (GIPVIKCGTV…TILALIEKRV (169 aa)) enclose the N-terminal Ras-GEF domain. The 268-residue stretch at 897 to 1164 (HPIEIGRQLT…YNKSLEIQPK (268 aa)) folds into the Ras-GEF domain. Disordered regions lie at residues 1067-1091 (KSPP…DPEN), 1165-1248 (GLDT…DDAP), and 1263-1493 (HPKI…SSNK). Over residues 1079 to 1088 (QQKDDLKASD) the composition is skewed to basic and acidic residues. Polar residues-rich tracts occupy residues 1208 to 1231 (HSQN…NTPL) and 1279 to 1289 (SRANQSNSVSL). Over residues 1308-1326 (STATSPTTLTTTTTPSSAG) the composition is skewed to low complexity. Positions 1350-1361 (LTPSRDNSSPSA) are enriched in polar residues. Residues 1381-1400 (STSSDVSSSPSTSGSTSSAT) show a composition bias toward low complexity. The segment covering 1402-1417 (ENQEQLRVIFDREESH) has biased composition (basic and acidic residues). Over residues 1426–1435 (PLPPALPPPR) the composition is skewed to pro residues. Residues 1453–1464 (HNSNSPTLSSEQ) are compositionally biased toward polar residues.

As to quaternary structure, interacts with cmd-1 in the presence of Ca(2+).

In terms of biological role, promotes the exchange of Ras-bound GDP by GTP. May regulate signaling pathways downstream of receptor tyrosine kinase, egl-15 and let-23. Required for larval and male spicule development, fluid homeostasis, vulva induction, spermatogenesis, and oogenesis by promoting meiosis prophase exit during oocyte maturation. Required for the delamination of G1 cell by promoting the loss of cell junctions and detachment from the excretory system during larval development. Plays a role in nicotinic acetylcholine receptor (nAChR)-mediated sensitivity to nicotine. Regulates synaptic levels of nAchR subunit lev-1 in the nerve cord. The protein is Son of sevenless homolog of Caenorhabditis elegans.